The chain runs to 134 residues: Aspartate 1-decarboxylase (134 aa).

The Schiff-base intermediate with substrate; via pyruvic acid role is filled by serine 25. Serine 25 is subject to Pyruvic acid (Ser). Threonine 57 contacts substrate. The active-site Proton donor is the tyrosine 58. Position 73–75 (73–75 (GAA)) interacts with substrate.

The protein belongs to the PanD family. As to quaternary structure, heterooctamer of four alpha and four beta subunits. The cofactor is pyruvate. Is synthesized initially as an inactive proenzyme, which is activated by self-cleavage at a specific serine bond to produce a beta-subunit with a hydroxyl group at its C-terminus and an alpha-subunit with a pyruvoyl group at its N-terminus.

It localises to the cytoplasm. The enzyme catalyses L-aspartate + H(+) = beta-alanine + CO2. Its pathway is cofactor biosynthesis; (R)-pantothenate biosynthesis; beta-alanine from L-aspartate: step 1/1. In terms of biological role, catalyzes the pyruvoyl-dependent decarboxylation of aspartate to produce beta-alanine. The protein is Aspartate 1-decarboxylase of Sulfurihydrogenibium sp. (strain YO3AOP1).